A 165-amino-acid chain; its full sequence is Choriogonadotropin subunit beta 7 (165 aa).

A signal peptide spans 1–20 (MEMFQGLLLLLLLSMGGTWA). 6 cysteine pairs are disulfide-bonded: Cys29–Cys77, Cys43–Cys92, Cys46–Cys130, Cys54–Cys108, Cys58–Cys110, and Cys113–Cys120. 2 N-linked (GlcNAc...) asparagine glycosylation sites follow: Asn33 and Asn50. Residues 131–165 (DDPRFQASSSSKAPPPSLPSPSRLPGPSDTPILPQ) form a disordered region. Residues Ser141, Ser147, Ser152, and Ser158 are each glycosylated (O-linked (GalNAc...) serine). Pro residues predominate over residues 143-154 (APPPSLPSPSRL).

The protein belongs to the glycoprotein hormones subunit beta family. As to quaternary structure, heterodimer of a common alpha chain identical in LH, FSH, TSH and HCG and a unique beta chain distinct in each of the hormones and confers receptor and biological specificity. In terms of tissue distribution, high expression in the placenta throughout pregnancy.

It localises to the secreted. Functionally, beta subunit of the human chorionic gonadotropin (hCG). hCG is a complex glycoprotein composed of two glycosylated subunits alpha and beta which are non-covalently associated. The alpha subunit is identical to those in the pituitary gonadotropin hormones (LH, FSH and TSH). The beta subunits are distinct in each of the hormones and confer receptor and biological specificity. Has an essential role for pregnancy and maternal adaptation. Stimulates the ovaries to synthesize the steroids that are essential for the maintenance of pregnancy. This chain is Choriogonadotropin subunit beta 7, found in Homo sapiens (Human).